The sequence spans 338 residues: Lumican (338 aa).

Residues 1–18 (MNVCAFSLALALVGSVSG) form the signal peptide. Gln19 bears the Pyrrolidone carboxylic acid mark. Sulfotyrosine is present on residues Tyr20, Tyr21, Tyr23, and Tyr30. The region spanning 28–66 (FMYGQISPNCAPECNCPHSYPTAMYCDDLKLKSVPMVPP) is the LRRNT domain. LRR repeat units lie at residues 67–88 (GIKYLYLRNNQIDHIDEKAFEN), 91–114 (DLQWLILDHNLLENSKIKGKVFSK), 117–137 (QLKKLHINYNNLTESVGPLPK), 138–159 (SLQDLQLTNNKISKLGSFDGLV), 160–181 (NLTFIYLQHNQLKEDAVSASLK), 185–205 (SLEYLDLSFNQMSKLPAGLPT), 206–227 (SLLTLYLDNNKISNIPDEYFKR), and 230–250 (GLQYLRLSHNELADSGVPGNS). N-linked (GlcNAc...) (keratan sulfate) asparagine glycosylation occurs at Asn88. N-linked (GlcNAc...) (keratan sulfate) asparagine glycosylation occurs at Asn127. An N-linked (GlcNAc...) (keratan sulfate) asparagine glycan is attached at Asn160. Asn252 carries an N-linked (GlcNAc...) (keratan sulfate) asparagine glycan. LRR repeat units follow at residues 255–276 (SLLELDLSYNKLKSIPTVNENL) and 277–296 (ENYYLEVNELEKFDVKSFCK). A disulfide bond links Cys295 and Cys328. Ser304 carries the post-translational modification Phosphoserine. Residues 305–326 (KIKHLRLDGNPLTQSSLPPDMY) form an LRR 11 repeat.

It belongs to the small leucine-rich proteoglycan (SLRP) family. SLRP class II subfamily. As to quaternary structure, binds to laminin. Post-translationally, contains keratan sulfate. Cys-37, Cys-41, Cys-43 and Cys-53 are involved in disulfide bonds. As to expression, cornea and other tissues.

The protein localises to the secreted. The protein resides in the extracellular space. Its subcellular location is the extracellular matrix. This is Lumican (Lum) from Mus musculus (Mouse).